The primary structure comprises 549 residues: Mitogen-activated protein kinase 15 (549 aa).

Residues 1 to 20 form a ubiquitin-conjugating region; the sequence is MCAAEVDRHVAQRYLIKRRL. The Protein kinase domain occupies 14–305; the sequence is YLIKRRLGKG…AEQALQHPYV (292 aa). Residues 20–28 and K43 contribute to the ATP site; that span reads LGKGAYGIV. The active-site Proton acceptor is the D138. T176 is modified (phosphothreonine). Residues 176 to 178 carry the TXY motif; sequence TEY. The residue at position 178 (Y178) is a Phosphotyrosine. The necessary to interact with ESRRA, to regulate its subcellular localization and to inhibit its transcriptional activity stretch occupies residues 266 to 286; that stretch reads LDALLPPDTPPEALDLLKRLL. The segment at 301 to 382 is requires for interaction with GABARAP, MAP1LC3B AND GABARAPL1; the sequence is QHPYVQRFHC…ARTQSLKSGV (82 aa). The segment at 370–507 is disordered; sequence ASPARTQSLK…PEPRPGRRMF (138 aa). PXXXP motif repeat units follow at residues 380–384 and 387–391; these read SGVLP and PAETP. PXXXP motif; regulates binding with chromatin and interaction with PCNA repeat units lie at residues 395-399 and 403-407; these read RGPKP and PGHDP. Positions 403–416 are enriched in basic and acidic residues; the sequence is PGHDPEHVEVRRQS. An Omega-N-methylarginine modification is found at R451. Residues 456–467 are compositionally biased toward polar residues; it reads SLTSQAEAQAAN. A compositionally biased stretch (low complexity) spans 483-492; that stretch reads AVGARRVPSR. The segment covering 493-502 has biased composition (basic and acidic residues); the sequence is LPREAPEPRP.

The protein belongs to the protein kinase superfamily. CMGC Ser/Thr protein kinase family. MAP kinase subfamily. Interacts with TGFB1I1. Interacts with CSK/c-Src, ABL1 and RET. Interacts with GABARAP, MAP1LC3B and GABARAPL1; controls, in a kinase-dependent fashion, both basal and starvation-induced autophagy. Interacts with ESRRA; promotes re-localization of ESRRA to the cytoplasm through a XPO1-dependent mechanism then inhibits ESRRA transcriptional activity. Interacts with PCNA; the interaction is chromatin binding- and kinase activity-dependent and prevents MDM2-mediated PCNA destruction by inhibiting the association of PCNA with MDM2. Interacts with DVL2. Interacts with CLIC3; MAPK15 does not phosphorylates CLIC3. Post-translationally, autophosphorylated on Thr-176 and Tyr-178; activates the enzyme. Ubiquitinated. Ubiquitination may allow its tight kinase activity regulation and rapid turnover. May be ubiquitinated by a SCF E3 ligase. As to expression, expressed at all stages of oocyte meiotic maturation.

The protein resides in the cytoplasm. It localises to the cytoskeleton. Its subcellular location is the cilium basal body. The protein localises to the cell junction. It is found in the tight junction. The protein resides in the microtubule organizing center. It localises to the centrosome. Its subcellular location is the centriole. The protein localises to the cytoplasmic vesicle. It is found in the autophagosome. The protein resides in the golgi apparatus. It localises to the nucleus. Its subcellular location is the spindle. The enzyme catalyses L-seryl-[protein] + ATP = O-phospho-L-seryl-[protein] + ADP + H(+). The catalysed reaction is L-threonyl-[protein] + ATP = O-phospho-L-threonyl-[protein] + ADP + H(+). With respect to regulation, activated by threonine and tyrosine phosphorylation. Inhibited by dual specificity phosphatases, such as DUSP1. Phosphorylation and activation in response to DNA damaging agents, serum stimulation. Constitutively activated when phosphorylated on Tyr-178. Activity depends on the relative rates of MAPK15 autophosphorylation and dephosphorylation by PTPN1. Atypical MAPK protein that regulates several process such as autophagy, ciliogenesis, protein trafficking/secretion and genome integrity, in a kinase activity-dependent manner. Controls both, basal and starvation-induced autophagy throught its interaction with GABARAP, MAP1LC3B and GABARAPL1 leading to autophagosome formation, SQSTM1 degradation and reduced MAP1LC3B inhibitory phosphorylation. Regulates primary cilium formation and the localization of ciliary proteins involved in cilium structure, transport, and signaling. Prevents the relocation of the sugar-adding enzymes from the Golgi to the endoplasmic reticulum, thereby restricting the production of sugar-coated proteins. Upon amino-acid starvation, mediates transitional endoplasmic reticulum site disassembly and inhibition of secretion. Binds to chromatin leading to MAPK15 activation and interaction with PCNA, that which protects genomic integrity by inhibiting MDM2-mediated degradation of PCNA. Regulates DA transporter (DAT) activity and protein expression via activation of RhoA. In response to H(2)O(2) treatment phosphorylates ELAVL1, thus preventing it from binding to the PDCD4 3'UTR and rendering the PDCD4 mRNA accessible to miR-21 and leading to its degradation and loss of protein expression. Also functions in a kinase activity-independent manner as a negative regulator of growth. Phosphorylates in vitro FOS and MBP. During oocyte maturation, plays a key role in the microtubule organization and meiotic cell cycle progression in oocytes, fertilized eggs, and early embryos. Interacts with ESRRA promoting its re-localization from the nucleus to the cytoplasm and then prevents its transcriptional activity. The sequence is that of Mitogen-activated protein kinase 15 from Mus musculus (Mouse).